The primary structure comprises 297 residues: ClpXP adapter protein SpxH (297 aa).

The protein belongs to the SpxH family. Interacts with Spx.

The protein resides in the cytoplasm. Its function is as follows. Adapter protein required for efficient degradation of Spx by ClpXP under non-stress conditions. Interaction with Spx stabilizes Spx and exposes the C-terminus of Spx for recognition and proteolysis by ClpXP. This chain is ClpXP adapter protein SpxH, found in Bacillus cereus (strain ATCC 10987 / NRS 248).